A 365-amino-acid chain; its full sequence is Green-sensitive opsin P521 (365 aa).

Over 1-51 the chain is Extracellular; the sequence is MTEAWNVAVFAARRSRDDDDTTRGSVFTYTNTNNTRGPFEGPNYHIAPRWV. The N-linked (GlcNAc...) asparagine glycan is linked to Asn33. The chain crosses the membrane as a helical span at residues 52-76; sequence YNLVSFFMIIVVIASCFTNGLVLVA. Over 77–88 the chain is Cytoplasmic; the sequence is TAKFKKLRHPLN. A helical membrane pass occupies residues 89–113; the sequence is WILVNLAFVDLVETLVASTISVFNQ. The Extracellular portion of the chain corresponds to 114-128; sequence IFGYFILGHPLCVIE. The cysteines at positions 125 and 202 are disulfide-linked. The helical transmembrane segment at 129–148 threads the bilayer; the sequence is GYVVSSCGITGLWSLAIISW. Residues 149 to 167 lie on the Cytoplasmic side of the membrane; that stretch reads ERWFVVCKPFGNIKFDSKL. Residues 168–191 traverse the membrane as a helical segment; sequence AIIGIVFSWVWAWGWSAPPIFGWS. Topologically, residues 192–217 are extracellular; that stretch reads RYWPHGLKTSCGPDVFSGSVELGCQS. A helical membrane pass occupies residues 218 to 245; it reads FMLTLMITCCFLPLFIIIVCYLQVWMAI. Topologically, residues 246–267 are cytoplasmic; the sequence is RAVAAQQKESESTQKAEREVSR. The chain crosses the membrane as a helical span at residues 268-291; that stretch reads MVVVMIVAFCICWGPYASFVSFAA. Over 292–299 the chain is Extracellular; sequence ANPGYAFH. The helical transmembrane segment at 300 to 324 threads the bilayer; it reads PLAAALPAYFAKSATIYNPVIYVFM. N6-(retinylidene)lysine is present on Lys311. Over 325–365 the chain is Cytoplasmic; sequence NRQFRNCIMQLFGKKVDDGSEASTTSRTEVSSVSNSSVAPA. The interval 342–365 is disordered; that stretch reads DGSEASTTSRTEVSSVSNSSVAPA. The segment covering 345–365 has biased composition (low complexity); the sequence is EASTTSRTEVSSVSNSSVAPA.

It belongs to the G-protein coupled receptor 1 family. Opsin subfamily. Post-translationally, phosphorylated on some or all of the serine and threonine residues present in the C-terminal region. In this lizard the color pigments are found in the rod-shaped photoreceptor cells which have been derived from ancestral cone-like photoreceptors.

It localises to the membrane. In terms of biological role, visual pigments are the light-absorbing molecules that mediate vision. They consist of an apoprotein, opsin, covalently linked to cis-retinal. The protein is Green-sensitive opsin P521 of Gekko gecko (Tokay gecko).